A 666-amino-acid chain; its full sequence is Nuclear distribution protein nudE homolog 1 (666 aa).

Residues 14–195 are a coiled coil; sequence EEEIAHYREK…KDQLARAIAT (182 aa). Disordered regions lie at residues 40-64, 220-310, 369-388, and 397-666; these read EFQQ…KQQA, DDIN…SGIP, KRVT…PAPH, and DHNT…KVKK. The span at 251-274 shows a compositional bias: polar residues; sequence RSGTMSSIPVASPSTKRFSQQIPH. Composition is skewed to low complexity over residues 275–287 and 372–383; these read SPSF…STTS and TSTTSTTSSTTT. Polar residues predominate over residues 400-410; it reads TTPTAQSQQFP. Low complexity-rich tracts occupy residues 449 to 465, 473 to 485, and 536 to 554; these read PTFR…LPSR, ASGS…SGTA, and SATP…STSN. Composition is skewed to polar residues over residues 587–599 and 614–638; these read RQSL…TPTT and SSLS…SGRP.

The protein belongs to the nudE family. In terms of assembly, self-associates. Interacts with PAC1.

It localises to the cytoplasm. It is found in the cytoskeleton. In terms of biological role, required for nuclear migration. The chain is Nuclear distribution protein nudE homolog 1 (NDE1) from Cryptococcus neoformans var. neoformans serotype D (strain B-3501A) (Filobasidiella neoformans).